A 552-amino-acid chain; its full sequence is Solute carrier family 22 member 6-B (552 aa).

Topologically, residues 1–16 (MAFQEILESLGGMGRY) are cytoplasmic. A helical membrane pass occupies residues 17–37 (QVIHVVLLSLPVFMLASHNLM). At 38-137 (QNFTAATPSH…LVCNHRRMRQ (100 aa)) the chain is on the extracellular side. A helical membrane pass occupies residues 138–158 (VAQSIYMAGVLVGSILFGGLS). The Cytoplasmic segment spans residues 159–164 (DKFGRR). Residues 165 to 184 (PLNIWSNLQMFVTGICAAFS) traverse the membrane as a helical segment. A topological domain (extracellular) is located at residue P185. A helical membrane pass occupies residues 186–206 (NYIWYCIFRFLTGVAFSGIVL). Residues 207–225 (NSYSLTVEWIPTGNRAFTS) lie on the Cytoplasmic side of the membrane. Residues 226–246 (TATGYCYTMGQLVLVGLAFII) traverse the membrane as a helical segment. Topologically, residues 247-250 (RDWQ) are extracellular. A helical transmembrane segment spans residues 251-271 (WLQLAASIPFFFYFLYSWWIP). Residues 272-336 (ESGRWLVLSG…YSALDLVRTP (65 aa)) are Cytoplasmic-facing. A helical transmembrane segment spans residues 337 to 356 (VVRRISFCISCTWFSTSFAY). A topological domain (extracellular) is located at residue Y357. The chain crosses the membrane as a helical span at residues 358 to 378 (GLALDLQSFGVSIYIIQIIFG). Over 379 to 398 (TVDIPAKFISYFITTYVGRR) the chain is Cytoplasmic. Residues 399–419 (VSQAITLILAGIAILVNISVP) form a helical membrane-spanning segment. The Extracellular segment spans residues 420 to 426 (QDFQTVR). A helical membrane pass occupies residues 427-447 (TAMAVFGKGCLAASFNCLYLY). Residues 448 to 459 (TGELYPTVIRQT) lie on the Cytoplasmic side of the membrane. A helical membrane pass occupies residues 460–480 (GMGLGAMMARLGGIIAPLAQM). The Extracellular segment spans residues 481 to 487 (TGDIYHS). Residues 488 to 508 (LPLIIFGCLPILSGIAGCFLP) form a helical membrane-spanning segment. The Cytoplasmic portion of the chain corresponds to 509–552 (ETLGVPLPETIEEVESPDKQQKDVNVSAKIPLKETELYNMKTDV).

This sequence belongs to the major facilitator (TC 2.A.1) superfamily. Organic cation transporter (TC 2.A.1.19) family. Post-translationally, glycosylated. Glycosylation is necessary for proper targeting of the transporter to the plasma membrane.

It localises to the cell membrane. Its subcellular location is the basolateral cell membrane. The protein resides in the basal cell membrane. Its function is as follows. Involved in the renal elimination of endogenous and exogenous organic anions. Mediates the sodium-independent uptake of p-aminohippurate (PAH), cidofovir, adefovir, 9-(2-phosphonylmethoxyethyl) guanine (PMEG), 9-(2-phosphonylmethoxyethyl) diaminopurine (PMEDAP) and edaravone sulfate. PAH uptake is inhibited by furosemide, steviol, phorbol 12-myristate 13-acetate (PMA), calcium ionophore A23187, benzylpenicillin, furosemide, indomethacin, bumetamide, losartan, probenecid, phenol red, urate, and alpha-ketoglutarate. This chain is Solute carrier family 22 member 6-B (slc22a6-b), found in Xenopus laevis (African clawed frog).